The chain runs to 397 residues: Lysophospholipid transporter LplT (397 aa).

Residues 1-17 (MSESVHTNTSLWSKGMK) are Periplasmic-facing. The chain crosses the membrane as a helical span at residues 18-38 (AVIVAQFLSAFGDNALLFATL). The Cytoplasmic portion of the chain corresponds to 39–52 (ALLKAQFYPEWSQP). A helical membrane pass occupies residues 53-73 (VLQMVFVGAYILFAPFVGQVA). Topologically, residues 74 to 90 (DSFAKGRVMMFANGLKL) are periplasmic. A helical membrane pass occupies residues 91-111 (LGAASICFGFNPFVGYTLVGI). Residues 112–144 (GAAAYSPAKYGILGELTTGDKLVKANGLMEAST) are Cytoplasmic-facing. A helical membrane pass occupies residues 145 to 165 (IAAILLGSVAGGVLADLHVLV). A topological domain (periplasmic) is located at residue Ala-166. The chain crosses the membrane as a helical span at residues 167–187 (LAACALAYAGAVAANIYIPKL). At 188-226 (AAARPGQSWNVLKMTCSFKSACTSLWQNGETRFSLVGTS) the chain is on the cytoplasmic side. The chain crosses the membrane as a helical span at residues 227 to 247 (LFWGAGVTLRFLLVLWVPVAL). Residues 248 to 256 (GITDNATPT) are Periplasmic-facing. The chain crosses the membrane as a helical span at residues 257–277 (YLNAMVAIGIVLGAGAAAKLV). The Cytoplasmic segment spans residues 278-280 (TLE). A helical transmembrane segment spans residues 281 to 301 (TVSRCMPAGILIGVVVLFFSL). The Periplasmic segment spans residues 302–304 (QHE). The chain crosses the membrane as a helical span at residues 305-325 (LLPAYALLMLIGVLGGFFVVP). Over 326–343 (LNALLQERGKKSVGAGNA) the chain is Cytoplasmic. Residues 344–364 (IAVQNLGENSAMLLMLGIYSL) traverse the membrane as a helical segment. At 365-366 (AV) the chain is on the periplasmic side. A helical transmembrane segment spans residues 367–387 (LVGIPVVPIGIGFGTLFALAI). The Cytoplasmic portion of the chain corresponds to 388 to 397 (TALWIWQRRH).

This sequence belongs to the major facilitator superfamily. LplT (TC 2.A.1.42) family.

The protein localises to the cell inner membrane. Functionally, catalyzes the facilitated diffusion of 2-acyl-glycero-3-phosphoethanolamine (2-acyl-GPE) into the cell. This chain is Lysophospholipid transporter LplT, found in Escherichia fergusonii (strain ATCC 35469 / DSM 13698 / CCUG 18766 / IAM 14443 / JCM 21226 / LMG 7866 / NBRC 102419 / NCTC 12128 / CDC 0568-73).